The primary structure comprises 202 residues: FMN reductase (NADH) RutF (202 aa).

A compositionally biased stretch (low complexity) spans 168–191 (PRAPRGGSAPAEPARGARAIGARP). Residues 168–202 (PRAPRGGSAPAEPARGARAIGARPPEGPVLALRSA) form a disordered region.

It belongs to the non-flavoprotein flavin reductase family. RutF subfamily.

The enzyme catalyses FMNH2 + NAD(+) = FMN + NADH + 2 H(+). Catalyzes the reduction of FMN to FMNH2 which is used to reduce pyrimidine by RutA via the Rut pathway. This chain is FMN reductase (NADH) RutF, found in Methylorubrum populi (strain ATCC BAA-705 / NCIMB 13946 / BJ001) (Methylobacterium populi).